A 592-amino-acid polypeptide reads, in one-letter code: Potassium-transporting ATPase potassium-binding subunit (592 aa).

A run of 11 helical transmembrane segments spans residues 7 to 27, 71 to 91, 136 to 156, 179 to 199, 287 to 307, 314 to 334, 411 to 431, 449 to 469, 473 to 493, 515 to 535, and 559 to 579; these read LQTV…GTFM, VLFN…QHLL, GLTV…IAVI, LYIL…QGVI, LEIL…GAMV, WTLL…LQGV, GLYT…LMIG, SVVT…IAMI, AVAA…YAFA, ILGA…VLAM, and FALW…FPAL.

This sequence belongs to the KdpA family. The system is composed of three essential subunits: KdpA, KdpB and KdpC.

The protein localises to the cell inner membrane. Its function is as follows. Part of the high-affinity ATP-driven potassium transport (or Kdp) system, which catalyzes the hydrolysis of ATP coupled with the electrogenic transport of potassium into the cytoplasm. This subunit binds the periplasmic potassium ions and delivers the ions to the membrane domain of KdpB through an intramembrane tunnel. This chain is Potassium-transporting ATPase potassium-binding subunit, found in Geobacter sulfurreducens (strain ATCC 51573 / DSM 12127 / PCA).